A 466-amino-acid polypeptide reads, in one-letter code: Nuclear pore complex protein Nup50 (466 aa).

Residues 1-14 (MAKRVAEKELTDRN) are compositionally biased toward basic and acidic residues. Positions 1-22 (MAKRVAEKELTDRNWDEEDEVE) are disordered. N6-acetyllysine is present on Lys8. Ser52 bears the Phosphoserine mark. Repeat 1 spans residues 76-77 (FG). The interval 76–302 (FGGSGGKPLE…FSAGSSSLFG (227 aa)) is 5 X 2 AA repeats of F-G. The residue at position 82 (Lys82) is an N6-acetyllysine. Residues 112-113 (FG) form repeat 2. Lys126 carries the N6-acetyllysine modification. 2 disordered regions span residues 128-150 (ISSP…STAC) and 200-257 (LENG…AEKK). Positions 131–150 (PKCNNSNQPPSSGPASSTAC) are enriched in polar residues. Positions 143 to 205 (GPASSTACPG…IEKQLENGGG (63 aa)) are binding to CDKN1B. Ser208 carries the phosphoserine modification. Repeat 3 spans residues 225–226 (FG). Positions 225–235 (FGSTKLQQESP) are enriched in polar residues. Ser234 is modified (phosphoserine). The segment covering 241–257 (NKAEDTSEKVEFTAEKK) has biased composition (basic and acidic residues). Thr246 carries the post-translational modification Phosphothreonine. Residue Ser268 is modified to Phosphoserine. Residues 271–272 (FG) form repeat 4. Ser294 carries the post-translational modification Phosphoserine. The stretch at 301 to 302 (FG) is repeat 5. Positions 316 to 343 (SAKASESPAGGGSSECRDGEEEENDEPP) are disordered. The RanBD1 domain maps to 333-466 (DGEEEENDEP…HKILLEKKDA (134 aa)). A Glycyl lysine isopeptide (Lys-Gly) (interchain with G-Cter in SUMO2) cross-link involves residue Lys351. N6-acetyllysine is present on Lys448.

As to quaternary structure, does not interact with TPR. Interacts with Importin alpha-2, Importin beta, Importin beta-2, NUP153, Ran binding protein 7, CDKN1B and itself. As to expression, widely expressed at low levels. Highest in the developing neural tube and adult testes.

The protein resides in the nucleus. It is found in the nuclear pore complex. The protein localises to the nucleus membrane. Its function is as follows. Component of the nuclear pore complex that has a direct role in nuclear protein import. Actively displaces NLSs from importin-alpha, and facilitates disassembly of the importin-alpha:beta-cargo complex and importin recycling. Interacts with regulatory proteins of cell cycle progression including CDKN1B. This interaction is required for correct intracellular transport and degradation of CDKN1B. This is Nuclear pore complex protein Nup50 (Nup50) from Mus musculus (Mouse).